The chain runs to 64 residues: MPKMKTNSAASKRVRVTGSGKLMHAGSAMRHNLEHKSARKRRELKADGVLATSQSKNMKKLLGR.

Positions 1-10 are enriched in polar residues; it reads MPKMKTNSAA. The interval 1–64 is disordered; that stretch reads MPKMKTNSAA…SKNMKKLLGR (64 aa).

Belongs to the bacterial ribosomal protein bL35 family.

This Bifidobacterium adolescentis (strain ATCC 15703 / DSM 20083 / NCTC 11814 / E194a) protein is Large ribosomal subunit protein bL35.